The following is a 495-amino-acid chain: Syntaphilin (495 aa).

The tract at residues methionine 1–glutamine 74 is disordered. The segment covering glycine 7–serine 49 has biased composition (low complexity). The stretch at leucine 79 to lysine 161 forms a coiled coil. Residues valine 191 to glycine 244 are disordered. Phosphoserine is present on residues serine 200 and serine 204. Polar residues predominate over residues arginine 207–lysine 217. Threonine 214 carries the phosphothreonine modification. Serine 219 carries the phosphoserine modification. Phosphothreonine is present on threonine 235. A helical transmembrane segment spans residues tyrosine 427–cysteine 446.

In terms of assembly, binds to STX1A. Interacts with DNM1; this interaction inhibits the binding of DNM1 to AMPH and DNM1-receptor-mediated endocytosis.

It is found in the membrane. It localises to the synapse. The protein localises to the synaptosome. Its function is as follows. Inhibits SNARE complex formation by absorbing free STX1A. This is Syntaphilin from Mus musculus (Mouse).